Consider the following 564-residue polypeptide: Septation ring formation regulator EzrA (564 aa).

Topologically, residues 1 to 4 are extracellular; it reads MVLY. The chain crosses the membrane as a helical span at residues 5–23; the sequence is IILAIIVIILIAVGVLFYL. Residues 24-564 lie on the Cytoplasmic side of the membrane; sequence RSNKRQIIEK…KHIEEEVIKQ (541 aa). 5 coiled-coil regions span residues 99–138, 190–223, 271–300, 350–435, and 471–550; these read SFNASQSEIDDANELMDSYEQSYQQQLEDVNEIIALYKDN, DGNYVQAHNHIAALNEQMKQLRSYMEEIPELIRE, LISRLELEEANDKLANINDKLDDMYDLIEH, VRQF…RRLL, and VKQL…ESVE.

The protein belongs to the EzrA family.

The protein localises to the cell membrane. Functionally, negative regulator of FtsZ ring formation; modulates the frequency and position of FtsZ ring formation. Inhibits FtsZ ring formation at polar sites. Interacts either with FtsZ or with one of its binding partners to promote depolymerization. This chain is Septation ring formation regulator EzrA, found in Staphylococcus aureus (strain Mu3 / ATCC 700698).